The sequence spans 106 residues: uncharacterized protein (106 aa).

A compositionally biased stretch (polar residues) spans 24 to 35 (ANSISSTSFYHK). 2 disordered regions span residues 24-49 (ANSI…SCEE) and 65-87 (LTAE…SSDE). 2 stretches are compositionally biased toward low complexity: residues 36–46 (SSNNNSHANAS) and 74–85 (SLSASNQPASSS).

This is an uncharacterized protein from Arabidopsis thaliana (Mouse-ear cress).